The primary structure comprises 376 residues: Light-dependent chlorophyll f synthase (376 aa).

The segment at 1–22 (MKLESDHVIATSDSSDYTSEPT) is disordered. Over residues 11–22 (TSDSSDYTSEPT) the composition is skewed to polar residues. 5 helical membrane-spanning segments follow: residues 51–68 (YVGWFGVLMIPCVLTAAT), 140–155 (HFLIGIIAYQDREWEL), 164–178 (WISLAFTAPVAASVS), 219–240 (LHQLGVIGVLGGAFAAAMHGSL), and 298–312 (FLAALPVAGIWSAAL). Histidine 140 is an a chlorophyll binding site. Histidine 220 serves as a coordination point for a chlorophyll.

It belongs to the reaction center PufL/M/PsbA/D family. Homodimer.

It is found in the cellular thylakoid membrane. In terms of biological role, synthesizes chlorophyll f or chlorophyllide f (Chl f, 2-formyl chlorophyll a), probably by oxidation of chlorophyll a or chlorophyllide a and reduction of plastoquinone. The reaction is probably light-dependent. Chl f absorbs far red light (FRL, 707 nm in 100% methanol), and is synthesized when cells are grown in FRL, where it provides the advantage of extending the spectral range of harvested light in terrestrial cyanobacteria. When ectopically expressed in Synechococcus PCC 7002 (which does not grow in FRL and does not make Chl f) produces Chl f (0.059% of total chlorophyll). The sequence is that of Light-dependent chlorophyll f synthase from Chlorogloeopsis fritschii (strain PCC 9212).